The primary structure comprises 336 residues: MATIKDVAKMAGVSTTTVSHVINKTRFVAKDTEEAVLSAIKQLNYSPSAVARSLKVNTTKSIGMIVTTSEAPYFAEIIHSVEEHCYRQGYSLFLCNTQNDPEKVKNHLEMLAKKRVDGLLVMCSEYTQDSLDLLSSFSTIPMVVMDWGPNANTDVIDDHSFDGGYLATKHLIECGHKKIGIICGELNKTTARTRYEGFEKAMEEAKLTINPSWVLEGAFEPEDGYECMNRLLTQEELPTALFCCNDVMALGAISALTEKGLRVPEDMSIIGYDDIHASRFYAPPLTTIHQSKLRLGRQAVNILLERITHKDEGVQQYSRIDITPELIIRKSVKSIL.

Residues 2–56 form the HTH lacI-type domain; it reads ATIKDVAKMAGVSTTTVSHVINKTRFVAKDTEEAVLSAIKQLNYSPSAVARSLKV. The H-T-H motif DNA-binding region spans 4-23; sequence IKDVAKMAGVSTTTVSHVIN. A DNA-binding region spans residues 48–56; it reads SAVARSLKV. Hypoxanthine-binding residues include Y73, K188, T190, F219, and D273.

In terms of assembly, homodimer.

It participates in purine metabolism; purine nucleotide biosynthesis [regulation]. Is the main repressor of the genes involved in the de novo synthesis of purine nucleotides, regulating purB, purC, purEK, purF, purHD, purL, purMN and guaBA expression. PurR is allosterically activated to bind its cognate DNA by binding the purine corepressors, hypoxanthine or guanine, thereby effecting transcription repression. The protein is HTH-type transcriptional repressor PurR of Haemophilus influenzae (strain 86-028NP).